The following is a 249-amino-acid chain: 5'-nucleotidase SurE (249 aa).

A divalent metal cation contacts are provided by Asp-8, Asp-9, Ser-39, and Asn-91.

This sequence belongs to the SurE nucleotidase family. Requires a divalent metal cation as cofactor.

The protein localises to the cytoplasm. The enzyme catalyses a ribonucleoside 5'-phosphate + H2O = a ribonucleoside + phosphate. Nucleotidase that shows phosphatase activity on nucleoside 5'-monophosphates. The sequence is that of 5'-nucleotidase SurE from Pseudomonas syringae pv. tomato (strain ATCC BAA-871 / DC3000).